We begin with the raw amino-acid sequence, 234 residues long: MAKATSEARRAVVLLSGGLDSSTCLAVARAEGLEAHCLSVDYGQRHKGELARARRIARALGAAGHRVVKVDLSAFGGSALTDAAIAVPKGRSEARMARDIPVTYVPARNTVMLSLALAHAEVIGAEQIFVGVNAIDYSGYPDCRPAFLHAFERLAKVATRAGVEGHPLRIRAPLLRLSKAGIVRLGTKLGVPYRMTLSCYDPIRGRACGRCDACSLRRKGFAEAGVQDPTQYAK.

15–25 is a binding site for ATP; the sequence is LSGGLDSSTCL. Zn(2+) contacts are provided by cysteine 199, cysteine 208, cysteine 211, and cysteine 214.

The protein belongs to the QueC family. Zn(2+) is required as a cofactor.

The enzyme catalyses 7-carboxy-7-deazaguanine + NH4(+) + ATP = 7-cyano-7-deazaguanine + ADP + phosphate + H2O + H(+). It participates in purine metabolism; 7-cyano-7-deazaguanine biosynthesis. In terms of biological role, catalyzes the ATP-dependent conversion of 7-carboxy-7-deazaguanine (CDG) to 7-cyano-7-deazaguanine (preQ(0)). This chain is 7-cyano-7-deazaguanine synthase, found in Anaeromyxobacter dehalogenans (strain 2CP-C).